Reading from the N-terminus, the 544-residue chain is Chaperonin GroEL (544 aa).

Residues T29 to P32, D86 to T90, G413, N476 to A478, and D492 each bind ATP.

This sequence belongs to the chaperonin (HSP60) family. Forms a cylinder of 14 subunits composed of two heptameric rings stacked back-to-back. Interacts with the co-chaperonin GroES.

It is found in the cytoplasm. The catalysed reaction is ATP + H2O + a folded polypeptide = ADP + phosphate + an unfolded polypeptide.. Functionally, together with its co-chaperonin GroES, plays an essential role in assisting protein folding. The GroEL-GroES system forms a nano-cage that allows encapsulation of the non-native substrate proteins and provides a physical environment optimized to promote and accelerate protein folding. The chain is Chaperonin GroEL from Bacillus licheniformis (strain ATCC 14580 / DSM 13 / JCM 2505 / CCUG 7422 / NBRC 12200 / NCIMB 9375 / NCTC 10341 / NRRL NRS-1264 / Gibson 46).